Reading from the N-terminus, the 460-residue chain is Probable carboxylesterase 11 (460 aa).

Composition is skewed to polar residues over residues 26 to 35 (QSSGDESSSD) and 132 to 145 (NSYG…SPEA). 2 disordered regions span residues 26–52 (QSSG…APNP) and 132–161 (NSYG…SSGG). The Involved in the stabilization of the negatively charged intermediate by the formation of the oxyanion hole signature appears at 173–175 (HGG). Active-site residues include serine 289, aspartate 392, and histidine 422.

It belongs to the 'GDXG' lipolytic enzyme family. Expressed in roots, leaves, stems, flowers and siliques.

It catalyses the reaction a carboxylic ester + H2O = an alcohol + a carboxylate + H(+). Functionally, carboxylesterase acting on esters with varying acyl chain length. The chain is Probable carboxylesterase 11 (CXE11) from Arabidopsis thaliana (Mouse-ear cress).